The chain runs to 445 residues: UNC93-like protein MFSD11 (445 aa).

Residues 8 to 28 (LLNIIILGIGFMFMFTAFQTS) form a helical membrane-spanning segment. Asn-40 carries an N-linked (GlcNAc...) asparagine glycan. The next 4 membrane-spanning stretches (helical) occupy residues 53 to 73 (AIIY…VAVI), 74 to 94 (GCQM…AMFI), 98 to 118 (TWSF…LWTA), and 138 to 158 (IFWA…YLAW). N-linked (GlcNAc...) asparagine glycosylation occurs at Asn-163. Helical transmembrane passes span 170–190 (RTVF…FFLI), 239–259 (MLLL…YSGV), 277–297 (LIGL…GLFG), 309–329 (PVVI…YLYM), 345–365 (AFIN…GLGD), 385–405 (APAF…AFFY), and 415–435 (LLIL…VEWG).

This sequence belongs to the unc-93 family.

The protein resides in the membrane. This Xenopus tropicalis (Western clawed frog) protein is UNC93-like protein MFSD11 (mfsd11).